The following is a 297-amino-acid chain: 4-hydroxy-tetrahydrodipicolinate synthase (297 aa).

Pyruvate is bound at residue T47. The active-site Proton donor/acceptor is the Y136. K165 serves as the catalytic Schiff-base intermediate with substrate. I206 is a pyruvate binding site.

This sequence belongs to the DapA family. Homotetramer; dimer of dimers.

The protein resides in the cytoplasm. It carries out the reaction L-aspartate 4-semialdehyde + pyruvate = (2S,4S)-4-hydroxy-2,3,4,5-tetrahydrodipicolinate + H2O + H(+). It participates in amino-acid biosynthesis; L-lysine biosynthesis via DAP pathway; (S)-tetrahydrodipicolinate from L-aspartate: step 3/4. Catalyzes the condensation of (S)-aspartate-beta-semialdehyde [(S)-ASA] and pyruvate to 4-hydroxy-tetrahydrodipicolinate (HTPA). This chain is 4-hydroxy-tetrahydrodipicolinate synthase, found in Campylobacter concisus (strain 13826).